The sequence spans 434 residues: tRNA modification GTPase MnmE (434 aa).

3 residues coordinate (6S)-5-formyl-5,6,7,8-tetrahydrofolate: Arg-20, Glu-79, and Val-119. Residues 219 to 361 (GLRVVLAGRP…LQEKLVEIGK (143 aa)) enclose the TrmE-type G domain. GTP-binding positions include 229–234 (NAGKST), 248–254 (APIAGTT), and 273–276 (DTAG). Ser-233 and Thr-254 together coordinate Mg(2+). Position 434 (Lys-434) interacts with (6S)-5-formyl-5,6,7,8-tetrahydrofolate.

It belongs to the TRAFAC class TrmE-Era-EngA-EngB-Septin-like GTPase superfamily. TrmE GTPase family. As to quaternary structure, homodimer. Heterotetramer of two MnmE and two MnmG subunits. K(+) serves as cofactor.

It localises to the cytoplasm. Exhibits a very high intrinsic GTPase hydrolysis rate. Involved in the addition of a carboxymethylaminomethyl (cmnm) group at the wobble position (U34) of certain tRNAs, forming tRNA-cmnm(5)s(2)U34. The polypeptide is tRNA modification GTPase MnmE (Zymomonas mobilis subsp. mobilis (strain ATCC 31821 / ZM4 / CP4)).